Reading from the N-terminus, the 221-residue chain is Urease accessory protein UreG (221 aa).

Gly19–Thr26 serves as a coordination point for GTP.

This sequence belongs to the SIMIBI class G3E GTPase family. UreG subfamily. As to quaternary structure, homodimer. UreD, UreF and UreG form a complex that acts as a GTP-hydrolysis-dependent molecular chaperone, activating the urease apoprotein by helping to assemble the nickel containing metallocenter of UreC. The UreE protein probably delivers the nickel.

The protein localises to the cytoplasm. Functionally, facilitates the functional incorporation of the urease nickel metallocenter. This process requires GTP hydrolysis, probably effectuated by UreG. This is Urease accessory protein UreG from Yersinia enterocolitica serotype O:8 / biotype 1B (strain NCTC 13174 / 8081).